Here is a 209-residue protein sequence, read N- to C-terminus: Large ribosomal subunit protein uL3 (209 aa).

Positions 117 to 142 (FQGPIKRHGQSRGPETHGSRYHRRPG) are disordered.

It belongs to the universal ribosomal protein uL3 family. In terms of assembly, part of the 50S ribosomal subunit. Forms a cluster with proteins L14 and L19.

Functionally, one of the primary rRNA binding proteins, it binds directly near the 3'-end of the 23S rRNA, where it nucleates assembly of the 50S subunit. This Clostridioides difficile (strain 630) (Peptoclostridium difficile) protein is Large ribosomal subunit protein uL3.